The sequence spans 347 residues: UDP-N-acetylenolpyruvoylglucosamine reductase (347 aa).

The region spanning 33-221 (AGGSAERIYL…SGAWFALPRD (189 aa)) is the FAD-binding PCMH-type domain. Residue R180 is part of the active site. Residue S250 is the Proton donor of the active site. Residue E320 is part of the active site.

It belongs to the MurB family. It depends on FAD as a cofactor.

It localises to the cytoplasm. It catalyses the reaction UDP-N-acetyl-alpha-D-muramate + NADP(+) = UDP-N-acetyl-3-O-(1-carboxyvinyl)-alpha-D-glucosamine + NADPH + H(+). It functions in the pathway cell wall biogenesis; peptidoglycan biosynthesis. Its function is as follows. Cell wall formation. The chain is UDP-N-acetylenolpyruvoylglucosamine reductase from Nitrosospira multiformis (strain ATCC 25196 / NCIMB 11849 / C 71).